The sequence spans 26 residues: Maculatin-3.1 (26 aa).

Alanine amide is present on Ala26.

As to expression, expressed by the skin dorsal glands.

Its subcellular location is the secreted. Functionally, shows antibacterial activity against S.uberis. This Ranoidea genimaculata (Brown-spotted tree frog) protein is Maculatin-3.1.